A 333-amino-acid chain; its full sequence is Perchlorate reductase subunit beta (333 aa).

The 29-residue stretch at 12–40 folds into the 4Fe-4S ferredoxin-type 1 domain; the sequence is LTYVTDLNKCIGCQTCTVACKKLWTTGPG. [4Fe-4S] cluster is bound by residues Cys-21, Cys-24, Cys-27, and Cys-31. A disordered region spans residues 101 to 121; that stretch reads KERVRPSPTPRSAPNWDEDQG. 4Fe-4S ferredoxin-type domains are found at residues 128 to 159 and 161 to 190; these read NSFF…KREQ and GIVV…FNPV. Cys-137, Cys-140, and Cys-145 together coordinate [4Fe-4S] cluster. Positions 149, 170, and 176 each coordinate [3Fe-4S] cluster. Residues Cys-180, Cys-197, Cys-200, Cys-212, and Cys-216 each coordinate [4Fe-4S] cluster.

Heterotrimer of alpha, beta and gamma subunits. It depends on [3Fe-4S] cluster as a cofactor. The cofactor is [4Fe-4S] cluster.

It localises to the periplasm. Its function is as follows. Component of the perchlorate reductase that catalyzes the reduction of perchlorate to chlorite and allows anaerobic growth on perchlorate as the sole electron acceptor. The beta subunit may be responsible for electron transfer to the catalytic alpha subunit PcrA. This Dechloromonas aromatica (strain RCB) protein is Perchlorate reductase subunit beta (pcrB).